Here is a 61-residue protein sequence, read N- to C-terminus: UPF0434 protein Pmen_1615 (61 aa).

The protein belongs to the UPF0434 family.

The protein is UPF0434 protein Pmen_1615 of Ectopseudomonas mendocina (strain ymp) (Pseudomonas mendocina).